Here is a 38-residue protein sequence, read N- to C-terminus: MKTKTSIKQICNLCKIVRRNKRLVNTCKLHKNHKHKQK.

This sequence belongs to the bacterial ribosomal protein bL36 family.

It localises to the plastid. Its subcellular location is the apicoplast. This chain is Large ribosomal subunit protein bL36c (rpl36), found in Theileria parva (East coast fever infection agent).